Reading from the N-terminus, the 371-residue chain is Histidinol-phosphate aminotransferase (371 aa).

The residue at position 228 (Lys-228) is an N6-(pyridoxal phosphate)lysine.

This sequence belongs to the class-II pyridoxal-phosphate-dependent aminotransferase family. Histidinol-phosphate aminotransferase subfamily. The cofactor is pyridoxal 5'-phosphate.

It carries out the reaction L-histidinol phosphate + 2-oxoglutarate = 3-(imidazol-4-yl)-2-oxopropyl phosphate + L-glutamate. Its pathway is amino-acid biosynthesis; L-histidine biosynthesis; L-histidine from 5-phospho-alpha-D-ribose 1-diphosphate: step 7/9. The sequence is that of Histidinol-phosphate aminotransferase from Methanococcus aeolicus (strain ATCC BAA-1280 / DSM 17508 / OCM 812 / Nankai-3).